The chain runs to 330 residues: GRB2-related adapter protein 2 (330 aa).

The region spanning 1 to 56 is the SH3 1 domain; the sequence is MEAVAKFDFTASGEDELSFHTGDVLKILSNQEEWFKAELGSQEGYVPKNFIDIQFP. Tyr-45 carries the phosphotyrosine modification. The SH2 domain maps to 58 to 149; that stretch reads WFHEGLSRHQ…QKQIFLRDRT (92 aa). Lys-106 is modified (N6-acetyllysine). The segment at 143-244 is disordered; the sequence is IFLRDRTRED…GSLDINDGHC (102 aa). Residues 144 to 164 show a composition bias toward basic and acidic residues; it reads FLRDRTREDQGHRGNSLDRRS. The residue at position 187 (Ser-187) is a Phosphoserine. The span at 209 to 222 shows a compositional bias: low complexity; the sequence is PAPQQLQQPPQQRY. Ser-236 is modified (phosphoserine). Thr-262 is modified (phosphothreonine). The 60-residue stretch at 271–330 folds into the SH3 2 domain; the sequence is GRVRWARALYDFEALEDDELGFHSGEVVEVLDSSNPSWWTGRLHNKLGLFPANYVAPMTR.

It belongs to the GRB2/sem-5/DRK family. Interacts with phosphorylated LIME1 upon TCR activation. Interacts with phosphorylated LAT and LAX1 upon TCR activation. Interacts with SHB. Interacts with PTPN23.

The protein localises to the nucleus. Its subcellular location is the cytoplasm. It is found in the endosome. Its function is as follows. Interacts with SLP-76 to regulate NF-AT activation. Binds to tyrosine-phosphorylated shc. This chain is GRB2-related adapter protein 2 (GRAP2), found in Homo sapiens (Human).